The primary structure comprises 283 residues: Pantothenate synthetase (283 aa).

34-41 (MGALHDGH) contacts ATP. The Proton donor role is filled by His-41. Gln-65 is a (R)-pantoate binding site. Residue Gln-65 participates in beta-alanine binding. 152–155 (GSKD) contacts ATP. Gln-158 contributes to the (R)-pantoate binding site. ATP contacts are provided by residues Ile-181 and 189–192 (MSSR).

The protein belongs to the pantothenate synthetase family. Homodimer.

It is found in the cytoplasm. It carries out the reaction (R)-pantoate + beta-alanine + ATP = (R)-pantothenate + AMP + diphosphate + H(+). The protein operates within cofactor biosynthesis; (R)-pantothenate biosynthesis; (R)-pantothenate from (R)-pantoate and beta-alanine: step 1/1. Catalyzes the condensation of pantoate with beta-alanine in an ATP-dependent reaction via a pantoyl-adenylate intermediate. The chain is Pantothenate synthetase from Rhodopseudomonas palustris (strain HaA2).